We begin with the raw amino-acid sequence, 2053 residues long: Nonribosomal peptide synthetase pboA (2053 aa).

Positions 16 to 402 (ACRDNADRPA…GRRDRVAKVR (387 aa)) are adenylation 1. The 77-residue stretch at 503 to 579 (RSYASVDEVI…HLITVCRERR (77 aa)) folds into the Carrier 1 domain. The residue at position 540 (S540) is an O-(pantetheine 4'-phosphoryl)serine. A condensation 1 region spans residues 611–896 (NDPSLYCVKH…LLQSVHRTVQ (286 aa)). The adenylation 2 stretch occupies residues 1034–1418 (SAAARNPTNI…GRRDRQVKLR (385 aa)). Residues 1515–1593 (VPDTSVKKII…DIVALVEGKI (79 aa)) form the Carrier 2 domain. The residue at position 1553 (S1553) is an O-(pantetheine 4'-phosphoryl)serine. The segment at 1630 to 1981 (NSQCQSGFNV…LQLRLEYDSD (352 aa)) is condensation 2.

This sequence belongs to the NRP synthetase family. It depends on pantetheine 4'-phosphate as a cofactor.

It functions in the pathway secondary metabolite biosynthesis. Functionally, nonribosomal peptide synthetase; part of the gene cluster that mediates the biosynthesis of protubonine B, a hydroxylated and diacetylated cyclo-L-Trp-L-Leu derivative. The first step of the protubonine B synthesis is performed by the nonribosomal peptide synthetase pboA that catalyzes the formation of cyclo-L-Trp-L-Leu by condensing L-Leu with L-Trp. The flavin-dependent monooxygenase pboD is responsible for hydroxylation at C-3 of the indole ring and subsequent formation of the pyrrolidine ring, leadind to protubonine D. Protubonine D is further diacetylated by two acetyltransferases, pboB and pboC, to form the final product protubonine B via protubonine C. In Aspergillus ustus, this protein is Nonribosomal peptide synthetase pboA.